The primary structure comprises 543 residues: Sensor histidine kinase DcuS (543 aa).

Topologically, residues methionine 1 to threonine 20 are cytoplasmic. The helical transmembrane segment at valine 21–phenylalanine 41 threads the bilayer. Over serine 42 to tryptophan 181 the chain is Periplasmic. (R)-malate is bound by residues arginine 107–histidine 110, lysine 121, glycine 140–leucine 142, and arginine 147. Residues serine 182 to valine 202 form a helical membrane-spanning segment. The Cytoplasmic portion of the chain corresponds to asparagine 203 to arginine 543. A PAS domain is found at leucine 212–aspartate 323. In terms of domain architecture, Histidine kinase spans glutamate 346–glycine 538. Position 349 is a phosphohistidine; by autocatalysis (histidine 349).

Homodimer. In terms of processing, autophosphorylated. The phosphoryl group is rapidly transferred to DcuR.

The protein resides in the cell inner membrane. The catalysed reaction is ATP + protein L-histidine = ADP + protein N-phospho-L-histidine.. Member of the two-component regulatory system DcuR/DcuS. Involved in the C4-dicarboxylate-stimulated regulation of the genes encoding the anaerobic fumarate respiratory system (frdABCD; nuoAN; dcuB; sdhCDAB; etc.). Weakly regulates the aerobic C4-dicarboxylate transporter dctA. Activates DcuR by phosphorylation. In Escherichia coli O6:H1 (strain CFT073 / ATCC 700928 / UPEC), this protein is Sensor histidine kinase DcuS (dcuS).